Here is a 322-residue protein sequence, read N- to C-terminus: Transaldolase (322 aa).

Lys136 functions as the Schiff-base intermediate with substrate in the catalytic mechanism.

This sequence belongs to the transaldolase family. Type 1 subfamily. Homodimer.

The protein localises to the cytoplasm. It catalyses the reaction D-sedoheptulose 7-phosphate + D-glyceraldehyde 3-phosphate = D-erythrose 4-phosphate + beta-D-fructose 6-phosphate. It functions in the pathway carbohydrate degradation; pentose phosphate pathway; D-glyceraldehyde 3-phosphate and beta-D-fructose 6-phosphate from D-ribose 5-phosphate and D-xylulose 5-phosphate (non-oxidative stage): step 2/3. Transaldolase is important for the balance of metabolites in the pentose-phosphate pathway. The protein is Transaldolase of Xanthomonas oryzae pv. oryzae (strain KACC10331 / KXO85).